The sequence spans 434 residues: Glutamate-1-semialdehyde 2,1-aminomutase 1 (434 aa).

Lys270 bears the N6-(pyridoxal phosphate)lysine mark.

The protein belongs to the class-III pyridoxal-phosphate-dependent aminotransferase family. HemL subfamily. As to quaternary structure, homodimer. It depends on pyridoxal 5'-phosphate as a cofactor.

The protein resides in the cytoplasm. It catalyses the reaction (S)-4-amino-5-oxopentanoate = 5-aminolevulinate. It functions in the pathway porphyrin-containing compound metabolism; protoporphyrin-IX biosynthesis; 5-aminolevulinate from L-glutamyl-tRNA(Glu): step 2/2. In Bacillus cereus (strain AH187), this protein is Glutamate-1-semialdehyde 2,1-aminomutase 1.